Consider the following 254-residue polypeptide: Leucyl/phenylalanyl-tRNA--protein transferase (254 aa).

It belongs to the L/F-transferase family.

It localises to the cytoplasm. The catalysed reaction is N-terminal L-lysyl-[protein] + L-leucyl-tRNA(Leu) = N-terminal L-leucyl-L-lysyl-[protein] + tRNA(Leu) + H(+). It catalyses the reaction N-terminal L-arginyl-[protein] + L-leucyl-tRNA(Leu) = N-terminal L-leucyl-L-arginyl-[protein] + tRNA(Leu) + H(+). It carries out the reaction L-phenylalanyl-tRNA(Phe) + an N-terminal L-alpha-aminoacyl-[protein] = an N-terminal L-phenylalanyl-L-alpha-aminoacyl-[protein] + tRNA(Phe). Functionally, functions in the N-end rule pathway of protein degradation where it conjugates Leu, Phe and, less efficiently, Met from aminoacyl-tRNAs to the N-termini of proteins containing an N-terminal arginine or lysine. This is Leucyl/phenylalanyl-tRNA--protein transferase from Burkholderia ambifaria (strain MC40-6).